Reading from the N-terminus, the 146-residue chain is DNA utilization protein HofO (146 aa).

Residues 20-37 form a helical membrane-spanning segment; the sequence is WAFWLLMLVTLIFLSSTH.

Its subcellular location is the cell inner membrane. Its function is as follows. Required for the use of extracellular DNA as a nutrient. This Escherichia coli (strain K12) protein is DNA utilization protein HofO (hofO).